Here is a 511-residue protein sequence, read N- to C-terminus: Bifunctional purine biosynthesis protein PurH (511 aa).

One can recognise an MGS-like domain in the interval 1-145 (MKKRALVSVS…KNHKFVSVIV (145 aa)).

The protein belongs to the PurH family.

The catalysed reaction is (6R)-10-formyltetrahydrofolate + 5-amino-1-(5-phospho-beta-D-ribosyl)imidazole-4-carboxamide = 5-formamido-1-(5-phospho-D-ribosyl)imidazole-4-carboxamide + (6S)-5,6,7,8-tetrahydrofolate. It carries out the reaction IMP + H2O = 5-formamido-1-(5-phospho-D-ribosyl)imidazole-4-carboxamide. Its pathway is purine metabolism; IMP biosynthesis via de novo pathway; 5-formamido-1-(5-phospho-D-ribosyl)imidazole-4-carboxamide from 5-amino-1-(5-phospho-D-ribosyl)imidazole-4-carboxamide (10-formyl THF route): step 1/1. The protein operates within purine metabolism; IMP biosynthesis via de novo pathway; IMP from 5-formamido-1-(5-phospho-D-ribosyl)imidazole-4-carboxamide: step 1/1. The sequence is that of Bifunctional purine biosynthesis protein PurH from Bacillus cereus (strain B4264).